Reading from the N-terminus, the 264-residue chain is Methionine aminopeptidase (264 aa).

Histidine 79 provides a ligand contact to substrate. Positions 97, 108, and 171 each coordinate a divalent metal cation. Histidine 178 lines the substrate pocket. A divalent metal cation-binding residues include glutamate 204 and glutamate 235.

Belongs to the peptidase M24A family. Methionine aminopeptidase type 1 subfamily. Monomer. It depends on Co(2+) as a cofactor. Zn(2+) serves as cofactor. The cofactor is Mn(2+). Fe(2+) is required as a cofactor.

It catalyses the reaction Release of N-terminal amino acids, preferentially methionine, from peptides and arylamides.. Its function is as follows. Removes the N-terminal methionine from nascent proteins. The N-terminal methionine is often cleaved when the second residue in the primary sequence is small and uncharged (Met-Ala-, Cys, Gly, Pro, Ser, Thr, or Val). Requires deformylation of the N(alpha)-formylated initiator methionine before it can be hydrolyzed. This is Methionine aminopeptidase from Buchnera aphidicola subsp. Acyrthosiphon pisum (strain APS) (Acyrthosiphon pisum symbiotic bacterium).